A 188-amino-acid polypeptide reads, in one-letter code: Peptidyl-prolyl cis-trans isomerase H (188 aa).

At A2 the chain carries N-acetylalanine. The region spanning 14-176 is the PPIase cyclophilin-type domain; it reads FFDVSIGGQE…WTHSLTCPAL (163 aa).

The protein belongs to the cyclophilin-type PPIase family. PPIase H subfamily. As to quaternary structure, interacts directly with PRPF4. Part of a heteromeric complex containing PPIH, PRPF3 and PRPF4 that is stable in the absence of RNA. Component of the U4/U6-U5 tri-snRNP complex composed of the U4, U6 and U5 snRNAs and at least PRPF3, PRPF4, PRPF6, PRPF8, PRPF31, SNRNP200, TXNL4A, SNRNP40, DDX23, CD2BP2, PPIH, SNU13, EFTUD2, SART1 and USP39. Heterodimer with PRPF18. Heterodimer with PRPF18.

The protein resides in the nucleus speckle. The protein localises to the cytoplasm. It catalyses the reaction [protein]-peptidylproline (omega=180) = [protein]-peptidylproline (omega=0). With respect to regulation, inhibited by cyclosporin A. Its function is as follows. PPIase that catalyzes the cis-trans isomerization of proline imidic peptide bonds in oligopeptides and may therefore assist protein folding. Participates in pre-mRNA splicing. May play a role in the assembly of the U4/U5/U6 tri-snRNP complex, one of the building blocks of the spliceosome. May act as a chaperone. The polypeptide is Peptidyl-prolyl cis-trans isomerase H (Ppih) (Mus musculus (Mouse)).